Here is a 363-residue protein sequence, read N- to C-terminus: RNA polymerase I-specific transcription initiation factor RRN5 (363 aa).

The segment at 301 to 344 is disordered; it reads LSRRDAPPVHQDENQENQENQENQEQDNTASEGESEAERDEIDE. A compositionally biased stretch (basic and acidic residues) spans 302–313; the sequence is SRRDAPPVHQDE. Residues 317–328 are compositionally biased toward low complexity; sequence NQENQENQEQDN. The span at 333 to 344 shows a compositional bias: acidic residues; the sequence is GESEAERDEIDE.

As to quaternary structure, component of the UAF (upstream activation factor) complex which consists of UAF30, RRN5, RRN9, RRN10, and histones H3 and H4.

Its subcellular location is the nucleus. The protein localises to the nucleolus. Its function is as follows. Component of the UAF (upstream activation factor) complex which interacts with the upstream element of the RNA polymerase I promoter and forms a stable preinitiation complex. Together with SPT15/TBP UAF seems to stimulate basal transcription to a fully activated level. The protein is RNA polymerase I-specific transcription initiation factor RRN5 (RRN5) of Saccharomyces cerevisiae (strain ATCC 204508 / S288c) (Baker's yeast).